The primary structure comprises 594 residues: Transcription factor TFIIIB component B'' (594 aa).

The interval 1–169 is disordered; it reads MSSIVNKSGT…ARRLSTISNK (169 aa). Serine 49 bears the Phosphoserine mark. The span at 150-168 shows a compositional bias: polar residues; that stretch reads LDSSSNSNGTARRLSTISN. Position 178 is a phosphoserine (serine 178). Disordered stretches follow at residues 217-245 and 317-343; these read SPPT…DENE and ARQE…KEER. 2 stretches are compositionally biased toward basic and acidic residues: residues 225-241 and 317-330; these read SLDR…SREA and ARQE…LTKE. The SANT domain maps to 415 to 466; the sequence is SYTDPWTVEEMIKFYKALSMWGTDFNLISQLYPYRSRKQVKAKFVNEEKKRP. Over residues 520-529 the composition is skewed to basic and acidic residues; sequence KNTAKEEDQT. Disordered stretches follow at residues 520–547 and 567–594; these read KNTA…GGIM and LKRK…EIDQ. The segment covering 579 to 594 has biased composition (acidic residues); it reads DNEDNEGSEEEPEIDQ.

This sequence belongs to the TFC5 family. TFIIIB comprises the TATA-binding protein (TBP), the B-related factor (BRF) and the B'' component (BDP1). Interacts with TFC4.

It is found in the nucleus. Functionally, general activator of RNA polymerase III transcription. This Saccharomyces cerevisiae (strain ATCC 204508 / S288c) (Baker's yeast) protein is Transcription factor TFIIIB component B'' (BDP1).